We begin with the raw amino-acid sequence, 876 residues long: MAP7 domain-containing protein 3 (876 aa).

3 disordered regions span residues 30 to 139, 162 to 200, and 402 to 438; these read AEER…KFKA, GGVM…VDNT, and TEAP…IDKR. Positions 39–54 are enriched in polar residues; sequence INSSAGANKRSSSTPD. Residues 58-136 are a coiled coil; that stretch reads LKNDVKQQLA…KQKQAEDTEK (79 aa). 2 stretches are compositionally biased toward basic and acidic residues: residues 60–139 and 169–196; these read NDVK…KFKA and KSGK…DMQH. Phosphoserine is present on residues Ser417 and Ser483. Coiled coils occupy residues 549-578 and 626-658; these read IQIR…IARK and SAMM…RRKA. Disordered regions lie at residues 558–683 and 742–783; these read QSKN…EIFP and IQGK…NPNH. Basic and acidic residues-rich tracts occupy residues 559 to 590 and 630 to 659; these read SKNE…DKVP and KSRD…RKAS. A compositionally biased stretch (acidic residues) spans 665 to 679; that stretch reads SEDEADDEGESEDSL. Positions 750-763 are enriched in basic residues; sequence SAKKPPTRPIRSRK. The segment covering 771–782 has biased composition (polar residues); it reads IRPTQSASSNPN.

It belongs to the MAP7 family. In terms of tissue distribution, high expression in lung, skeletal muscle, brain, and kidney, with much weaker expression in spleen, small intestine, liver, and heart.

The protein resides in the cytoplasm. The protein localises to the cytoskeleton. It is found in the spindle. Its function is as follows. Promotes the assembly and stability of microtubules. This chain is MAP7 domain-containing protein 3 (Map7d3), found in Mus musculus (Mouse).